The sequence spans 537 residues: Fucosyltransferase 6 (537 aa).

The Cytoplasmic segment spans residues 1 to 20 (MYHIFQISSEVFRAFGLKMK). The helical; Signal-anchor for type II membrane protein transmembrane segment at 21-41 (ILLTLVFSGLLIWSVVLVSFS) threads the bilayer. Over 42-537 (NDFNNQLLVA…NDGLKLFDEL (496 aa)) the chain is Lumenal. Residues Asn-54, Asn-231, and Asn-378 are each glycosylated (N-linked (GlcNAc...) asparagine).

This sequence belongs to the glycosyltransferase 37 family. Expressed in roots and flowers.

The protein resides in the golgi apparatus. The protein localises to the golgi stack membrane. It functions in the pathway protein modification; protein glycosylation. Functionally, may be involved in cell wall biosynthesis. May act as a fucosyltransferase. The protein is Fucosyltransferase 6 (FUT6) of Arabidopsis thaliana (Mouse-ear cress).